Consider the following 1068-residue polypeptide: Ubiquitin-protein ligase E3B (1068 aa).

Residue Met-1 is modified to N-acetylmethionine. The IQ domain maps to 29 to 58; sequence RERAAVVIQAHVRSFLCRSRLQRDIRREID. Ser-419 is modified (phosphoserine). An HECT domain is found at 702–1068; it reads SQHAMKGVIR…ISMNTGFELS (367 aa). Cys-1036 functions as the Glycyl thioester intermediate in the catalytic mechanism.

As to expression, widely expressed.

It is found in the postsynaptic density. It carries out the reaction S-ubiquitinyl-[E2 ubiquitin-conjugating enzyme]-L-cysteine + [acceptor protein]-L-lysine = [E2 ubiquitin-conjugating enzyme]-L-cysteine + N(6)-ubiquitinyl-[acceptor protein]-L-lysine.. Its pathway is protein modification; protein ubiquitination. E3 ubiquitin-protein ligase which accepts ubiquitin from an E2 ubiquitin-conjugating enzyme in the form of a thioester and then directly transfers the ubiquitin to targeted substrates. Ubiquitinates BCKDK and targets it for degradation, thereby regulating various metabolic processes. Involved in the positive regulation of neurite branching in hippocampal neurons and the control of neuronal spine number and morphology, through the ubiquitination of PPP3CC. This Homo sapiens (Human) protein is Ubiquitin-protein ligase E3B (UBE3B).